The following is a 602-amino-acid chain: Probable HECT-type ubiquitin ligase-interacting protein creD (602 aa).

Disordered regions lie at residues 375–398 (EVDP…GALS) and 457–499 (TADY…MATP). Residues 463–475 (PSSGSNSHSPASP) are compositionally biased toward low complexity. Over residues 477–492 (LSRRPSDEGYRDHDHI) the composition is skewed to basic and acidic residues.

Belongs to the arrestin family. As to quaternary structure, interacts with hulA.

Its function is as follows. Component of the regulatory network controlling carbon source utilization through ubiquitination and deubiquitination involving creA, creB, creC, creD and acrB. May be involved in signaling by recognizing appropriately phosphorylated substrates via its arrestin domains and then recruit a HECT-type ubiquitin ligase such as hulA, leading to ubiquitination of the substrate, providing a link between ubiquitination and phosphorylation in protein regulation and stability. This Aspergillus clavatus (strain ATCC 1007 / CBS 513.65 / DSM 816 / NCTC 3887 / NRRL 1 / QM 1276 / 107) protein is Probable HECT-type ubiquitin ligase-interacting protein creD (creD).